A 540-amino-acid chain; its full sequence is Chaperonin GroEL 1 (540 aa).

Residues 29–32 (TLGP), 86–90 (DGTTT), glycine 413, 477–479 (NAA), and aspartate 493 each bind ATP.

This sequence belongs to the chaperonin (HSP60) family. Forms a cylinder of 14 subunits composed of two heptameric rings stacked back-to-back. Interacts with the co-chaperonin GroES.

The protein localises to the cytoplasm. The enzyme catalyses ATP + H2O + a folded polypeptide = ADP + phosphate + an unfolded polypeptide.. Its function is as follows. Together with its co-chaperonin GroES, plays an essential role in assisting protein folding. The GroEL-GroES system forms a nano-cage that allows encapsulation of the non-native substrate proteins and provides a physical environment optimized to promote and accelerate protein folding. The chain is Chaperonin GroEL 1 from Salinispora arenicola (strain CNS-205).